Here is a 427-residue protein sequence, read N- to C-terminus: Serine hydroxymethyltransferase (427 aa).

Residues L124 and 128–130 (GHL) contribute to the (6S)-5,6,7,8-tetrahydrofolate site. K233 carries the post-translational modification N6-(pyridoxal phosphate)lysine.

This sequence belongs to the SHMT family. As to quaternary structure, homodimer. Pyridoxal 5'-phosphate serves as cofactor.

The protein localises to the cytoplasm. The enzyme catalyses (6R)-5,10-methylene-5,6,7,8-tetrahydrofolate + glycine + H2O = (6S)-5,6,7,8-tetrahydrofolate + L-serine. It functions in the pathway one-carbon metabolism; tetrahydrofolate interconversion. The protein operates within amino-acid biosynthesis; glycine biosynthesis; glycine from L-serine: step 1/1. Functionally, catalyzes the reversible interconversion of serine and glycine with tetrahydrofolate (THF) serving as the one-carbon carrier. This reaction serves as the major source of one-carbon groups required for the biosynthesis of purines, thymidylate, methionine, and other important biomolecules. Also exhibits THF-independent aldolase activity toward beta-hydroxyamino acids, producing glycine and aldehydes, via a retro-aldol mechanism. The chain is Serine hydroxymethyltransferase from Paracoccus denitrificans (strain Pd 1222).